Reading from the N-terminus, the 709-residue chain is Elongation factor G (709 aa).

Residues 9–292 (AYYRNIGISA…AVVEYLPSPT (284 aa)) enclose the tr-type G domain. Residues 18 to 25 (AHIDAGKT), 89 to 93 (DTPGH), and 143 to 146 (NKMD) contribute to the GTP site.

The protein belongs to the TRAFAC class translation factor GTPase superfamily. Classic translation factor GTPase family. EF-G/EF-2 subfamily.

It is found in the cytoplasm. Its function is as follows. Catalyzes the GTP-dependent ribosomal translocation step during translation elongation. During this step, the ribosome changes from the pre-translocational (PRE) to the post-translocational (POST) state as the newly formed A-site-bound peptidyl-tRNA and P-site-bound deacylated tRNA move to the P and E sites, respectively. Catalyzes the coordinated movement of the two tRNA molecules, the mRNA and conformational changes in the ribosome. This Blochmanniella floridana protein is Elongation factor G.